Reading from the N-terminus, the 254-residue chain is 3-deoxy-manno-octulosonate cytidylyltransferase (254 aa).

Belongs to the KdsB family.

It is found in the cytoplasm. The enzyme catalyses 3-deoxy-alpha-D-manno-oct-2-ulosonate + CTP = CMP-3-deoxy-beta-D-manno-octulosonate + diphosphate. The protein operates within nucleotide-sugar biosynthesis; CMP-3-deoxy-D-manno-octulosonate biosynthesis; CMP-3-deoxy-D-manno-octulosonate from 3-deoxy-D-manno-octulosonate and CTP: step 1/1. It participates in bacterial outer membrane biogenesis; lipopolysaccharide biosynthesis. Activates KDO (a required 8-carbon sugar) for incorporation into bacterial lipopolysaccharide in Gram-negative bacteria. This Chlamydia abortus (strain DSM 27085 / S26/3) (Chlamydophila abortus) protein is 3-deoxy-manno-octulosonate cytidylyltransferase.